Here is a 320-residue protein sequence, read N- to C-terminus: Putative protein FRMPD2-like (320 aa).

PDZ domains are found at residues 1-46 and 90-178; these read MTSI…ERRV and EVKL…CRPP. Residues 215–239 are disordered; the sequence is DQEDSWRDSASPDAGEGLGLRPESS.

The protein is Putative protein FRMPD2-like of Homo sapiens (Human).